Reading from the N-terminus, the 373-residue chain is Glutamine synthetase (373 aa).

Position 2 is an N-acetylalanine (A2). Positions 2–25 (ATSASSHLNKGIKQMYMSLPQGEK) are required for glutamine-induced ubiquitination by CRL4(CRBN) and proteasomal degradation. N6-acetyllysine occurs at positions 11 and 14. One can recognise a GS beta-grasp domain in the interval 24–106 (EKVQAMYIWV…VFCEVFKYNQ (83 aa)). Residue Y104 is modified to Phosphotyrosine. Residues 113-373 (LRHTCKRIMD…TGDQPFQYKN (261 aa)) form the GS catalytic domain. E134 lines the ATP pocket. E134, E136, E196, and E203 together coordinate Mn(2+). Residue 203 to 208 (EFQIGP) participates in ATP binding. Residue 246–247 (NW) participates in L-glutamate binding. Mn(2+) is bound at residue H253. ATP-binding positions include 255–257 (NFS), R319, and R324. R319 serves as a coordination point for L-glutamate. 336–338 (YFE) is a binding site for ADP. E338 is a Mn(2+) binding site. R340 contacts L-glutamate. The residue at position 343 (S343) is a Phosphoserine.

The protein belongs to the glutamine synthetase family. Decamer; composed of two pentamers. Interacts with PALMD. Interacts with RHOJ. Interacts with BEST2; this interaction tethers a fraction of GLUL to the membrane, causing a decrease of cytosolic glutamine synthase (GS) activity and inhibits the chloride channel activity of BEST2 by affecting the gating at the aperture in the absence of intracellular glutamate. Requires Mg(2+) as cofactor. It depends on Mn(2+) as a cofactor. Post-translationally, palmitoylated; undergoes autopalmitoylation. In terms of processing, acetylated by EP300/p300; acetylation is stimulated by increased glutamine levels and promotes ubiquitin-mediated proteasomal degradation. Ubiquitinated by ZNRF1. Ubiquitinated by the DCX (DDB1-CUL4-X-box) E3 ubiquitin-protein ligase complex called CRL4(CRBN), leading to proteasomal degradation.

The protein localises to the cytoplasm. It is found in the cytosol. Its subcellular location is the microsome. It localises to the mitochondrion. The protein resides in the cell membrane. The enzyme catalyses L-glutamate + NH4(+) + ATP = L-glutamine + ADP + phosphate + H(+). The catalysed reaction is L-cysteinyl-[protein] + hexadecanoyl-CoA = S-hexadecanoyl-L-cysteinyl-[protein] + CoA. Glutamine synthetase activity is inhibited by methionine sulfoximine (MSO). Glutamine synthetase that catalyzes the ATP-dependent conversion of glutamate and ammonia to glutamine. Its role depends on tissue localization: in the brain, it regulates the levels of toxic ammonia and converts neurotoxic glutamate to harmless glutamine, whereas in the liver, it is one of the enzymes responsible for the removal of ammonia. Plays a key role in ammonium detoxification during erythropoiesis: the glutamine synthetase activity is required to remove ammonium generated by porphobilinogen deaminase (HMBS) during heme biosynthesis to prevent ammonium accumulation and oxidative stress. Essential for proliferation of fetal skin fibroblasts. Independently of its glutamine synthetase activity, required for endothelial cell migration during vascular development. Involved in angiogenesis by regulating membrane localization and activation of the GTPase RHOJ, possibly by promoting RHOJ palmitoylation. May act as a palmitoyltransferase for RHOJ: able to autopalmitoylate and then transfer the palmitoyl group to RHOJ. Plays a role in ribosomal 40S subunit biogenesis. Through the interaction with BEST2, inhibits BEST2 channel activity by affecting the gating at the aperture in the absence of intracellular L-glutamate, but sensitizes BEST2 to intracellular L-glutamate, which promotes the opening of BEST2 and thus relieves its inhibitory effect on BEST2. The sequence is that of Glutamine synthetase from Cricetulus griseus (Chinese hamster).